The sequence spans 327 residues: Opticin (327 aa).

The first 19 residues, 1–19, serve as a signal peptide directing secretion; it reads MKLPAFLSLLALVLLEAGT. Tyr-61 and Tyr-67 each carry sulfotyrosine. In terms of domain architecture, LRRNT spans 111 to 148; the sequence is VLGSPNSHGLPTCLICVCLGSSVYCDDADLENIPPLPK. LRR repeat units lie at residues 149 to 170, 173 to 194, 197 to 218, 219 to 237, 243 to 263, 264 to 285, and 295 to 315; these read TTTY…DFKG, KLKR…ALRL, ALQD…PPAI, EVLD…QPEA, KLQF…PLPP, SLRS…AFCD, and WLED…PSAY. An intrachain disulfide couples Cys-284 to Cys-317.

Belongs to the small leucine-rich proteoglycan (SLRP) family. SLRP class III subfamily. As to quaternary structure, homodimer. In terms of processing, O-glycosylated. Post-translationally, proteolytically cleaved by MMP1, MMP2, MMP3, MMP7, MMP8, MMP9, ADAMTS4, and ADAMTS5. Proteolytically cleaved by MMP13. Sulfated on tyrosine residues. Ocular tissues, cartilage, ligament, skin, muscle and testes.

Its subcellular location is the secreted. It localises to the extracellular space. It is found in the extracellular matrix. In terms of biological role, inhibits angiogenesis in the vitreous humor of the eye, and therefore represses neovascularization. Binds collagen fibrils. May be involved in collagen fiber organization via regulation of other members of the small leucine-rich repeat proteoglycan superfamily. In Canis lupus familiaris (Dog), this protein is Opticin (OPTC).